The sequence spans 223 residues: MADSEEQEDYKIQGFDADIQNLLKTALKEPGSVDLEKAANVIVDQSLRDSTFSREAGRMCYTIIQVESKQTGCTMFRSSLLNRLQVEYRNRKETRARSLQEWVCYVGFMCNVFDYLRVNNMPMLALVNPVYDCLFDLVQPDSLKKEVEVDCLVLQLHRVGEQLEKMNCQRMDELFSQLRDGFLLQGGLSSLTQLLLLEMIEYRAAGWSMTDAAQKYYYSEVSD.

The MIF4G domain maps to 9–206 (DYKIQGFDAD…LEMIEYRAAG (198 aa)).

The protein belongs to the MIF4GD family. Interacts with eif4g1, eif4g2 and slbp; probably tethered by SLBP to the 3'-end of mRNAs ending with the histone stem-loop, it also interacts with eif4g1 which is bound to their 5'-end.

The protein localises to the cytoplasm. Its subcellular location is the nucleus. Its function is as follows. Functions in replication-dependent translation of histone mRNAs which differ from other eukaryotic mRNAs in that they do not end with a poly-A tail but a stem-loop. May participate in circularizing those mRNAs specifically enhancing their translation. The polypeptide is MIF4G domain-containing protein B (mif4gd-b) (Xenopus laevis (African clawed frog)).